The sequence spans 262 residues: UPF0758 protein R01728 (262 aa).

The tract at residues 23–44 (PEKRTRNSPATAPAPATDTHYH) is disordered. Positions 31–40 (PATAPAPATD) are enriched in low complexity. The MPN domain occupies 140–262 (VLSSWSAVID…HVSLKGLRLF (123 aa)). Histidine 211, histidine 213, and aspartate 224 together coordinate Zn(2+). The short motif at 211–224 (HNHPSGDPTPSRAD) is the JAMM motif element.

This sequence belongs to the UPF0758 family.

This Rhizobium meliloti (strain 1021) (Ensifer meliloti) protein is UPF0758 protein R01728.